We begin with the raw amino-acid sequence, 145 residues long: D-aminoacyl-tRNA deacylase (145 aa).

The Gly-cisPro motif, important for rejection of L-amino acids motif lies at 137–138 (GP).

Belongs to the DTD family. In terms of assembly, homodimer.

It localises to the cytoplasm. The catalysed reaction is glycyl-tRNA(Ala) + H2O = tRNA(Ala) + glycine + H(+). It catalyses the reaction a D-aminoacyl-tRNA + H2O = a tRNA + a D-alpha-amino acid + H(+). Its function is as follows. An aminoacyl-tRNA editing enzyme that deacylates mischarged D-aminoacyl-tRNAs. Also deacylates mischarged glycyl-tRNA(Ala), protecting cells against glycine mischarging by AlaRS. Acts via tRNA-based rather than protein-based catalysis; rejects L-amino acids rather than detecting D-amino acids in the active site. By recycling D-aminoacyl-tRNA to D-amino acids and free tRNA molecules, this enzyme counteracts the toxicity associated with the formation of D-aminoacyl-tRNA entities in vivo and helps enforce protein L-homochirality. This chain is D-aminoacyl-tRNA deacylase, found in Salmonella agona (strain SL483).